The following is a 54-amino-acid chain: MARNEVRPVIKLRSTAGTGYTYVTRKNRRNDPDRMVLRKYDPVARRHVDFREER.

It belongs to the bacterial ribosomal protein bL33 family.

In Streptomyces griseus subsp. griseus (strain JCM 4626 / CBS 651.72 / NBRC 13350 / KCC S-0626 / ISP 5235), this protein is Large ribosomal subunit protein bL33A.